Consider the following 111-residue polypeptide: SYFVEWIPNNVKTAVCDIPPRGLKMSATFIGNSTAIQELFKRISEQFTAMFRRKAFLHWYTGEGMDEMEFTEAESNMNDLVSEYQQYQDATAEDEGEFDEEEAEGEGQEYA.

Residues 82 to 111 (SEYQQYQDATAEDEGEFDEEEAEGEGQEYA) are disordered. Acidic residues predominate over residues 91-111 (TAEDEGEFDEEEAEGEGQEYA).

The protein belongs to the tubulin family. Dimer of alpha and beta chains. A typical microtubule is a hollow water-filled tube with an outer diameter of 25 nm and an inner diameter of 15 nM. Alpha-beta heterodimers associate head-to-tail to form protofilaments running lengthwise along the microtubule wall with the beta-tubulin subunit facing the microtubule plus end conferring a structural polarity. Microtubules usually have 13 protofilaments but different protofilament numbers can be found in some organisms and specialized cells. Mg(2+) is required as a cofactor.

It is found in the cytoplasm. The protein localises to the cytoskeleton. Its function is as follows. Tubulin is the major constituent of microtubules, a cylinder consisting of laterally associated linear protofilaments composed of alpha- and beta-tubulin heterodimers. Microtubules grow by the addition of GTP-tubulin dimers to the microtubule end, where a stabilizing cap forms. Below the cap, tubulin dimers are in GDP-bound state, owing to GTPase activity of alpha-tubulin. The sequence is that of Tubulin beta chain from Lymnaea stagnalis (Great pond snail).